Here is a 329-residue protein sequence, read N- to C-terminus: MLDLENIIVIGVSHENLSLLERENFMRTRPKYIIERLYTEKKINAYINLSTCLRTEFYIELNSNIKAKEIKNLFSVDMIVKSRVEAIEYLFKVGCGFYSVIKGEDQILAQVKGAYAEALENEHSSKFLNIIFNKSIELGKKFRTKSMIAHNALSLEAISLKFIKSKFPNIEDKNIFILGIGELAQDILTLLTKEQLKNIYIANRTYHKAEQIKKEFDIVNIVDYREKYPKMIEADVIISATSAPHIVVEYDKFVAQMKENKDYLFIDLAVPRDVDERLANFKNIEIYNLDDIWEVYHLNSMNRDKLLEDYSYLIDEQMEKLIKTLNYYK.

Residues 51-54, Ser-99, 104-106, and Gln-110 contribute to the substrate site; these read TCLR and EDQ. The Nucleophile role is filled by Cys-52. An NADP(+)-binding site is contributed by 179–184; the sequence is GIGELA.

Belongs to the glutamyl-tRNA reductase family. As to quaternary structure, homodimer.

The enzyme catalyses (S)-4-amino-5-oxopentanoate + tRNA(Glu) + NADP(+) = L-glutamyl-tRNA(Glu) + NADPH + H(+). It participates in porphyrin-containing compound metabolism; protoporphyrin-IX biosynthesis; 5-aminolevulinate from L-glutamyl-tRNA(Glu): step 1/2. Functionally, catalyzes the NADPH-dependent reduction of glutamyl-tRNA(Glu) to glutamate 1-semialdehyde (GSA). The sequence is that of Glutamyl-tRNA reductase from Fusobacterium nucleatum subsp. nucleatum (strain ATCC 25586 / DSM 15643 / BCRC 10681 / CIP 101130 / JCM 8532 / KCTC 2640 / LMG 13131 / VPI 4355).